The chain runs to 370 residues: Protein RecA (370 aa).

The segment at Met-1–Asp-20 is disordered. Gly-78–Thr-85 is an ATP binding site.

Belongs to the RecA family.

The protein localises to the cytoplasm. Can catalyze the hydrolysis of ATP in the presence of single-stranded DNA, the ATP-dependent uptake of single-stranded DNA by duplex DNA, and the ATP-dependent hybridization of homologous single-stranded DNAs. It interacts with LexA causing its activation and leading to its autocatalytic cleavage. This chain is Protein RecA, found in Prochlorococcus marinus (strain MIT 9515).